We begin with the raw amino-acid sequence, 674 residues long: Endopolyphosphatase (674 aa).

The Cytoplasmic portion of the chain corresponds to 1–21; the sequence is MVVVGKSEVRNVSMSRPKKKS. Propeptides (removed in mature form) lie at residues 1–83 and 385–674; these read MVVV…VIIK and EQST…YKDD. A Glycyl lysine isopeptide (Lys-Gly) (interchain with G-Cter in ubiquitin) cross-link involves residue Lys-6. Residues 22-42 traverse the membrane as a helical; Signal-anchor for type II membrane protein segment; that stretch reads LIAILSTCVLFFLVFIIGAKF. Residues 43-674 are Vacuolar-facing; sequence QYVSVFSKFL…SFASSGYKDD (632 aa). Asn-58 carries an N-linked (GlcNAc...) asparagine glycan. The interval 384–403 is disordered; that stretch reads MEQSTRVQQGEDSNEEDEET. Residues Asn-505 and Asn-511 are each glycosylated (N-linked (GlcNAc...) asparagine).

The protein belongs to the endopolyphosphatase PPN1 family. In terms of assembly, homotetramer. Interacts with PPN2. The cofactor is Mn(2+). Mg(2+) is required as a cofactor. It depends on Co(2+) as a cofactor. Zn(2+) serves as cofactor. In terms of processing, processing by proteases in the vacuole is required for activation. Post-translationally, ubiquitinated. Ubiquitination mediates sorting into internal vesicles in late endosomes. TUL1 and RSP5 are required for ubiquitination. Other cytoplasmic Lys residues than Lys-6 may also be ubiquitinated. N-glycosylated. N-glycosylation is essential for the protease-mediated maturation.

It localises to the vacuole membrane. It is found in the cytoplasm. It carries out the reaction [phosphate](n+1) + n H2O = (n+1) phosphate + n H(+). The enzyme catalyses [phosphate](n) + H2O = [phosphate](n-1) + phosphate + H(+). It catalyses the reaction dATP + H2O = dADP + phosphate + H(+). Inhibited by heparin and EDTA. Catalyzes the hydrolysis of inorganic polyphosphate (polyP) chains of many hundreds of phosphate residues into shorter lengths. Has both exopolyphosphatase and endopolyphosphatase activities at different ratios depending on divalent cations by cleaving phosphate from the chain end and by fragmenting long-chain polymers into shorter ones, respectively. The limited digestion products are 1 and 3 P(i) residues. Also releases phosphate from dATP. dATP phosphohydrolase activity is about 7-fold lower than the exopolyphosphatase activity. The chain is Endopolyphosphatase from Saccharomyces cerevisiae (strain ATCC 204508 / S288c) (Baker's yeast).